We begin with the raw amino-acid sequence, 302 residues long: Sulfate adenylyltransferase subunit 2 (302 aa).

Belongs to the PAPS reductase family. CysD subfamily. Heterodimer composed of CysD, the smaller subunit, and CysN.

The enzyme catalyses sulfate + ATP + H(+) = adenosine 5'-phosphosulfate + diphosphate. It functions in the pathway sulfur metabolism; hydrogen sulfide biosynthesis; sulfite from sulfate: step 1/3. With CysN forms the ATP sulfurylase (ATPS) that catalyzes the adenylation of sulfate producing adenosine 5'-phosphosulfate (APS) and diphosphate, the first enzymatic step in sulfur assimilation pathway. APS synthesis involves the formation of a high-energy phosphoric-sulfuric acid anhydride bond driven by GTP hydrolysis by CysN coupled to ATP hydrolysis by CysD. This Shigella boydii serotype 4 (strain Sb227) protein is Sulfate adenylyltransferase subunit 2.